The chain runs to 486 residues: Heme A synthase COX15 (486 aa).

The N-terminal 33 residues, 1–33 (MLFRNIEVGRQAAKLLTRTSSRLAWQSIGASRN), are a transit peptide targeting the mitochondrion. Over 34–85 (ISTIRQQIRKTQLYNFKKTVSIRPFSLSSPVFKPHVASESNPIESRLKTSKN) the chain is Mitochondrial matrix. Residues 86-106 (VAYWLIGTSGLVFGIVVLGGL) form a helical membrane-spanning segment. Topologically, residues 107-170 (TRLTESGLSI…FIFFMEWIHR (64 aa)) are mitochondrial intermembrane. Position 169 (His-169) interacts with heme o. Residues 171 to 191 (LWGRAIGAVFILPAVYFAVSK) form a helical membrane-spanning segment. Residues 192 to 200 (KTSGHVNKR) are Mitochondrial matrix-facing. The chain crosses the membrane as a helical span at residues 201–221 (LFGLAGLLGLQGFVGWWMVKS). The Mitochondrial intermembrane segment spans residues 222–243 (GLDQEQLDARKSKPTVSQYRLT). The helical transmembrane segment at 244–264 (THLGTAFFLYMGMLWTGLEIL) threads the bilayer. His-245 lines the heme o pocket. Residues 265–293 (RECKWIKNPVQAISLFKKLDNPAIGPMRK) lie on the Mitochondrial matrix side of the membrane. The helical transmembrane segment at 294–314 (ISLALLAVSFLTAMSGGMVAG) threads the bilayer. Over 315-364 (LDAGWVYNTWPKMGERWFPSSRELMDENFCRREDKKDLWWRNLLENPVTV) the chain is Mitochondrial intermembrane. A helical transmembrane segment spans residues 365-387 (QLVHRTCAYVAFTSVLAAHMYAI). His-368 provides a ligand contact to heme b. Residues 388 to 402 (KKKAVIPRNAMTSLH) are Mitochondrial matrix-facing. A helical transmembrane segment spans residues 403–423 (VMMGVVTLQATLGILTILYLV). Position 424 (Pro-424) is a topological domain, mitochondrial intermembrane. A helical membrane pass occupies residues 425–445 (ISLASIHQAGALALLTSSLVF). Residue His-431 participates in heme b binding. Residues 446 to 486 (ASQLRKPRAPMRNVIITLPHSSKVTSGKILSEASKLASKPL) lie on the Mitochondrial matrix side of the membrane.

Belongs to the COX15/CtaA family. Type 2 subfamily. Forms 200-350 kDa oligomeric complexes independent on heme binding. In addition to form homooligomeric complexes, a portion also associates with the mitochondrial respiratory supercomplexes. Interacts with CcO assembly factors PET117, SHY1, COA3 and COA1, CcO subunit COX13 and cytochrome b-c1 subunit COR1. It depends on heme b as a cofactor.

Its subcellular location is the mitochondrion inner membrane. It catalyses the reaction Fe(II)-heme o + 2 A + H2O = Fe(II)-heme a + 2 AH2. It functions in the pathway porphyrin-containing compound metabolism; heme A biosynthesis; heme A from heme O: step 1/1. Functionally, catalyzes the second reaction in the biosynthesis of heme A, a prosthetic group of mitochondrial cytochrome c oxidase (CcO). Heme A is synthesized from heme B by two sequential enzymatic reactions catalyzed by heme O synthase (HOS/COX10) and heme A synthase (HAS/COX15). HAS catalyzes the conversion of heme O to heme A by two successive hydroxylations of the methyl group at C8, in a reaction that involves matrix ferredoxin YAH1 and ferredoxin reductase ARH1. The first hydroxylation forms heme I, the second hydroxylation results in an unstable dihydroxymethyl group, which spontaneously dehydrates, resulting in the formyl group of heme A. May also play a secondary role in CcO assembly. Plays a role in the maturation of COX1, the heme A-containing structural CcO subunit, possibly by interacting with the COX1-containing sub-assembly complexes that form prior to heme A insertion. May also positively regulate the upstream enzymatic reaction, farnesylation of heme B by HOS/COX10. This chain is Heme A synthase COX15, found in Saccharomyces cerevisiae (strain ATCC 204508 / S288c) (Baker's yeast).